The chain runs to 170 residues: Adenine phosphoribosyltransferase (170 aa).

Belongs to the purine/pyrimidine phosphoribosyltransferase family. As to quaternary structure, homodimer.

It localises to the cytoplasm. The enzyme catalyses AMP + diphosphate = 5-phospho-alpha-D-ribose 1-diphosphate + adenine. The protein operates within purine metabolism; AMP biosynthesis via salvage pathway; AMP from adenine: step 1/1. Functionally, catalyzes a salvage reaction resulting in the formation of AMP, that is energically less costly than de novo synthesis. This Geobacillus sp. (strain WCH70) protein is Adenine phosphoribosyltransferase.